The primary structure comprises 340 residues: Protein LSM14 homolog car-1 (340 aa).

Positions 1 to 81 constitute a Sm domain; the sequence is MSNQTPYIGS…IKDLIVCDTP (81 aa). The segment covering 101 to 125 has biased composition (low complexity); the sequence is SRSAPASDGAPAASAGSSRAGTPSR. A disordered region spans residues 101–148; it reads SRSAPASDGAPAASAGSSRAGTPSRNSPLGQIIQNQRPGRGGYQQNFQ. Residues 126–148 show a composition bias toward polar residues; that stretch reads NSPLGQIIQNQRPGRGGYQQNFQ. The DFDF domain occupies 178–214; sequence VNHREKLKFESDFDFEKANEKFQEVLVDNLEKLNIED. Positions 227–243 match the FFD box motif; the sequence is AFYDKKTSFFDNISCES. The TFG box signature appears at 251-271; it reads TGRPDWKKERETNQETFGHNA. Residues 277–340 are disordered; sequence YRRGFGGRGR…QGNTAAAAEQ (64 aa). Residues 280 to 296 are compositionally biased toward gly residues; that stretch reads GFGGRGRGGNRGYGGYN. Over residues 312-325 the composition is skewed to low complexity; the sequence is GYRQNNGGYRRGGY.

It belongs to the LSM14 family.

Its subcellular location is the nucleus. Its function is as follows. Transcriptional regulator. Involved in modulating embryonic expression of ATP-dependent chaperone cdc-48.1. May play a role in mRNA gene silencing, and RNA granule (P-body) assembly. The polypeptide is Protein LSM14 homolog car-1 (Caenorhabditis elegans).